The sequence spans 732 residues: MRHVLSLVYKCSVFSKQVTVFSNHLRLSHSQQWGSNKLHRKIKIPNPFREIIMADPKIEEILAPLRANVKEQGDLVRKLKEEKAPEIDIKKAVAELKTRKKILEDKELSLAPAEDLFDRAKMEDLIKRRFFYDQSFAIYGGITGQFDFGPMGCALKSNMIHLWKKFFILQEQMLEVECSILTPEPVLKASGHVERFADLMTKDIKTGECFRLDHLIKGHLEKIKSDKNTKIELKAEIEDILIKLDGMNADEMSALMKRFEMKSPISGNDLTPPIEFNLMFNTQIGPSGLVKGFLRPETAQGIFVNFKRLLEFNQGRLPFAAAQIGNSFRNEISPRSGLLRVREFTMCEIEHFCDVKEHPKFESVKNTQSLLYSADNQEQGKPADLTTIGDAVCKGIVNNETLGYFMARIHMYMLAVGIDPKRLRFRQHMGNEMAHYACDCWDAECLSSYGWIECVGCADRSAYDLTQHTKATGIRLAAEKKLPAPKQIEVVEAIANNGRIGKAFKKDSQAINDTLATLDNAALEEMQKELDSNGEYTLITARGEFKLTPSLVNVKKTQKTIHVEEIIPSVIEPSFGVGRILYCILEHNFRMREGDEQRTYFSLPPTVAPMKCVVLPLSGNAEFQPFVRDLSQELITVDVSHKVDDSSGSIGRRYARTDELGVPYAVTVDFDTIKEPHTVTLRERDSMRQVRLPMADVPTVVRDLSNSKILWSDVEQKYPKFEQQETVKGTSV.

Residues 1–27 (MRHVLSLVYKCSVFSKQVTVFSNHLRL) constitute a mitochondrion transit peptide. Residues 61–117 (ILAPLRANVKEQGDLVRKLKEEKAPEIDIKKAVAELKTRKKILEDKELSLAPAEDLF) enclose the WHEP-TRS domain. E297 is a binding site for glycine. ATP contacts are provided by residues 329-331 (RNE) and 340-341 (RV). Glycine is bound at residue E348. 453–454 (EC) contacts ATP. Glycine is bound at residue 572–574 (EPS). R579 contributes to the ATP binding site.

Belongs to the class-II aminoacyl-tRNA synthetase family. Homodimer.

The protein localises to the mitochondrion. Its subcellular location is the cytoplasm. It is found in the cell projection. It localises to the axon. The enzyme catalyses tRNA(Gly) + glycine + ATP = glycyl-tRNA(Gly) + AMP + diphosphate. The catalysed reaction is 2 ATP + H(+) = P(1),P(4)-bis(5'-adenosyl) tetraphosphate + diphosphate. Functionally, catalyzes the ATP-dependent ligation of glycine to the 3'-end of its cognate tRNA, via the formation of an aminoacyl-adenylate intermediate (Gly-AMP). Also produces diadenosine tetraphosphate (Ap4A), a universal pleiotropic signaling molecule needed for cell regulation pathways, by direct condensation of 2 ATPs. Thereby, may play a special role in Ap4A homeostasis. Required for terminal arborization of both dendrites and axons during development. The sequence is that of Glycine--tRNA ligase from Bombyx mori (Silk moth).